We begin with the raw amino-acid sequence, 45 residues long: Amphipathic peptide Hj0164 (45 aa).

The N-terminal stretch at 1-23 (MKSQAFFLLFLVVLLLATTQSEA) is a signal peptide. Residue F33 is modified to Phenylalanine amide. Residues 37-45 (SLRDVDTMK) constitute a propeptide that is removed on maturation.

It belongs to the non-disulfide-bridged peptide (NDBP) superfamily. Short antimicrobial peptide (group 4) family. In terms of tissue distribution, expressed by the venom gland.

It localises to the secreted. The protein resides in the target cell membrane. Amphipathic peptide that shows antibacterial activities. The protein is Amphipathic peptide Hj0164 of Hottentotta judaicus (Black scorpion).